We begin with the raw amino-acid sequence, 510 residues long: NAD(P)H-quinone oxidoreductase subunit 2, chloroplastic (510 aa).

The next 13 membrane-spanning stretches (helical) occupy residues 26-46 (LFDGSFIFPECILIFGLILLL), 57-77 (IPWLYFISSTSLVMSIMALLF), 99-119 (IFQVLILLCSTLCIPLSVEYI), 124-144 (MAITEFLLFVLTATLGGMFLC), 149-169 (LITIFVAPECFSFCSYLLSGY), 184-204 (LLMGGASSSILVHGFSWLYGL), 227-247 (PGISIALIFITVGIGFKLSPA), 295-315 (WHLLLEILALLSMILGNLIAI), 323-343 (MLAYSSIGQIGYIIIGIIVGD), 354-374 (YMLFYISMNLGTFACIILFGL), 395-415 (ALSLALCLLSLGGLPPLAGFF), 418-438 (LYLFWCGWQAGLYFLVLIALV), and 484-504 (MIVCVIASTIPGISMNPIIAI).

It belongs to the complex I subunit 2 family. As to quaternary structure, NDH is composed of at least 16 different subunits, 5 of which are encoded in the nucleus.

The protein resides in the plastid. It is found in the chloroplast thylakoid membrane. It carries out the reaction a plastoquinone + NADH + (n+1) H(+)(in) = a plastoquinol + NAD(+) + n H(+)(out). The catalysed reaction is a plastoquinone + NADPH + (n+1) H(+)(in) = a plastoquinol + NADP(+) + n H(+)(out). In terms of biological role, NDH shuttles electrons from NAD(P)H:plastoquinone, via FMN and iron-sulfur (Fe-S) centers, to quinones in the photosynthetic chain and possibly in a chloroplast respiratory chain. The immediate electron acceptor for the enzyme in this species is believed to be plastoquinone. Couples the redox reaction to proton translocation, and thus conserves the redox energy in a proton gradient. The sequence is that of NAD(P)H-quinone oxidoreductase subunit 2, chloroplastic from Trachelium caeruleum (Blue throatwort).